A 1140-amino-acid chain; its full sequence is Condensin-2 complex subunit G2 (1140 aa).

The HEAT repeat unit spans residues Leu-460–Lys-493.

As to quaternary structure, component of the condensin-2 complex, which contains the smc2 and smc4 heterodimer, and three non SMC subunits that probably regulate the complex: ncaph2, ncapd3 and ncapg2.

The protein resides in the nucleus. Regulatory subunit of the condensin-2 complex, a complex which establishes mitotic chromosome architecture and is involved in physical rigidity of the chromatid axis. Plays a role in the embryonic development of the head and kidney structures. This chain is Condensin-2 complex subunit G2, found in Danio rerio (Zebrafish).